Here is a 508-residue protein sequence, read N- to C-terminus: Cytochrome P450 monooxygenase BipB (508 aa).

Residues 11 to 31 (ELAWLLLGPLVLFYVFKLFIY) form a helical membrane-spanning segment. Heme is bound at residue Cys-448.

It belongs to the cytochrome P450 family. The cofactor is heme.

The protein resides in the membrane. It functions in the pathway sesquiterpene biosynthesis. In terms of biological role, cytochrome P450 monooxygenase; part of the minimal biosynthetic bip cluster that mediates the biosynthesis of bridged polycyclic sesquiterpenoids derived from sativene, isosativene, and longifolene. The sesquiterpene cyclase BipA acts as a versatile cyclase that converts farnesyl diphosphate (FPP) into (-)-sativene as the dominant product and (-)-isosativene and (-)-longifolene as minor ones. The cytochrome P450 monooxygenase BipB then hydroxylates different enantiomeric sesquiterpenes, such as (-)-longifolene and (+)-longifolene, at C-15 and C-14. The C-15- or both C-15- and C-14-hydroxylated products are further oxidized by unclustered oxidases, resulting in a structurally diverse array of sesquiterpenoids. The BipB-catalyzed hydroxylation at C-15 serves as an initiator for the oxidation by the unclustered oxidases. The chain is Cytochrome P450 monooxygenase BipB from Cochliobolus sativus (Common root rot and spot blotch fungus).